Consider the following 607-residue polypeptide: Zinc metalloproteinase-disintegrin-like atrase-A (607 aa).

The N-terminal stretch at 1–20 is a signal peptide; that stretch reads MIQALLVIICLAVFPHQGSS. The propeptide occupies 21-196; it reads IILESGNVND…KTSQLTNTPE (176 aa). Positions 205-398 constitute a Peptidase M12B domain; the sequence is KYIEFYLVVD…ERPQCILNKP (194 aa). Glu-208 serves as a coordination point for Ca(2+). N-linked (GlcNAc...) asparagine glycosylation is found at Asn-220 and Asn-270. Residue Asp-290 participates in Ca(2+) binding. Asn-301 carries an N-linked (GlcNAc...) asparagine glycan. 3 cysteine pairs are disulfide-bonded: Cys-314/Cys-393, Cys-353/Cys-377, and Cys-355/Cys-360. Zn(2+)-binding residues include His-338, His-342, and His-348. Residues Cys-393, Asn-396, Asn-411, Phe-413, Glu-415, Glu-418, and Asp-421 each coordinate Ca(2+). Residues 406–492 form the Disintegrin domain; the sequence is RPVCGNNFVE…ECPTDSLQRN (87 aa). Intrachain disulfides connect Cys-409-Cys-438, Cys-420-Cys-433, Cys-422-Cys-428, Cys-432-Cys-455, Cys-446-Cys-452, Cys-451-Cys-477, Cys-464-Cys-484, Cys-471-Cys-503, Cys-496-Cys-508, Cys-515-Cys-565, Cys-530-Cys-573, Cys-543-Cys-553, Cys-560-Cys-599, and Cys-593-Cys-604. N-linked (GlcNAc...) asparagine glycosylation occurs at Asn-434. Residues 470 to 472 carry the D/ECD-tripeptide motif; that stretch reads DCD. Residues Asp-472, Leu-473, Glu-475, Asp-487, and Ser-488 each contribute to the Ca(2+) site. Asn-522 is a glycosylation site (N-linked (GlcNAc...) asparagine).

The protein belongs to the venom metalloproteinase (M12B) family. P-III subfamily. P-IIIa sub-subfamily. In terms of assembly, monomer. Zn(2+) serves as cofactor. As to expression, expressed by the venom gland.

The protein resides in the secreted. Functionally, snake venom zinc metalloproteinase that inhibits platelet aggregation by cleaving platelet glycoprotein Ib alpha (GP1BA) at Glu-298/Asp-299, and abolishes binding of von Willebrand factor (VWF) to GPIBA. The chain is Zinc metalloproteinase-disintegrin-like atrase-A from Naja atra (Chinese cobra).